A 167-amino-acid chain; its full sequence is Peptide deformylase (167 aa).

C91 and H133 together coordinate Fe cation. The active site involves E134. Residue H137 participates in Fe cation binding.

The protein belongs to the polypeptide deformylase family. The cofactor is Fe(2+).

The catalysed reaction is N-terminal N-formyl-L-methionyl-[peptide] + H2O = N-terminal L-methionyl-[peptide] + formate. Removes the formyl group from the N-terminal Met of newly synthesized proteins. Requires at least a dipeptide for an efficient rate of reaction. N-terminal L-methionine is a prerequisite for activity but the enzyme has broad specificity at other positions. In Neisseria gonorrhoeae (strain ATCC 700825 / FA 1090), this protein is Peptide deformylase.